Here is a 136-residue protein sequence, read N- to C-terminus: C-type natriuretic peptide prohormone (136 aa).

An N-terminal signal peptide occupies residues 1–21; the sequence is MSGQTSFYCGLLLVLLIQAQA. A disulfide bridge links cysteine 120 with cysteine 136.

The protein belongs to the natriuretic peptide family. As to expression, CNP-115 is differentially processed to produce CNP-38 and CNP-39 in the heart and CNP-22 in the brain.

It is found in the secreted. Hormone which may be vasoactive and natriuretic. Has a cGMP-stimulating activity. The protein is C-type natriuretic peptide prohormone of Triakis scyllium (Banded houndshark).